Reading from the N-terminus, the 140-residue chain is uncharacterized protein (140 aa).

The C2H2-type zinc-finger motif lies at 21 to 42 (CPYCNYTNADVKAIKKHIKSKH).

This sequence to M.jannaschii MJECL27.

This is an uncharacterized protein from Methanocaldococcus jannaschii (strain ATCC 43067 / DSM 2661 / JAL-1 / JCM 10045 / NBRC 100440) (Methanococcus jannaschii).